The chain runs to 207 residues: Ribosome maturation factor RimM (207 aa).

Residues 130–207 form the PRC barrel domain; it reads EDEFYWVDLI…RIVVDWGLDY (78 aa).

This sequence belongs to the RimM family. Binds ribosomal protein uS19.

The protein localises to the cytoplasm. Its function is as follows. An accessory protein needed during the final step in the assembly of 30S ribosomal subunit, possibly for assembly of the head region. Essential for efficient processing of 16S rRNA. May be needed both before and after RbfA during the maturation of 16S rRNA. It has affinity for free ribosomal 30S subunits but not for 70S ribosomes. This is Ribosome maturation factor RimM from Cupriavidus taiwanensis (strain DSM 17343 / BCRC 17206 / CCUG 44338 / CIP 107171 / LMG 19424 / R1) (Ralstonia taiwanensis (strain LMG 19424)).